The following is a 369-amino-acid chain: GTPase Obg (369 aa).

The Obg domain occupies 1–159 (MKFIDEARIE…RMLKLELKVL (159 aa)). The tract at residues 128–147 (LHFKSSTNRAPRQKTDGKPG) is disordered. One can recognise an OBG-type G domain in the interval 160–334 (ADVGLLGMPN…LCYAIYDYLA (175 aa)). Residues 166 to 173 (GMPNAGKS), 191 to 195 (FTTLA), 213 to 216 (DIPG), 284 to 287 (NKLD), and 315 to 317 (SAL) each bind GTP. Ser-173 and Thr-193 together coordinate Mg(2+).

It belongs to the TRAFAC class OBG-HflX-like GTPase superfamily. OBG GTPase family. In terms of assembly, monomer. It depends on Mg(2+) as a cofactor.

Its subcellular location is the cytoplasm. Its function is as follows. An essential GTPase which binds GTP, GDP and possibly (p)ppGpp with moderate affinity, with high nucleotide exchange rates and a fairly low GTP hydrolysis rate. Plays a role in control of the cell cycle, stress response, ribosome biogenesis and in those bacteria that undergo differentiation, in morphogenesis control. The polypeptide is GTPase Obg (Burkholderia multivorans (strain ATCC 17616 / 249)).